The following is a 299-amino-acid chain: 4-diphosphocytidyl-2-C-methyl-D-erythritol kinase (299 aa).

Residue lysine 11 is part of the active site. ATP is bound at residue 94 to 104 (PQGGGLGGGSS). Residue aspartate 136 is part of the active site.

The protein belongs to the GHMP kinase family. IspE subfamily.

The catalysed reaction is 4-CDP-2-C-methyl-D-erythritol + ATP = 4-CDP-2-C-methyl-D-erythritol 2-phosphate + ADP + H(+). It functions in the pathway isoprenoid biosynthesis; isopentenyl diphosphate biosynthesis via DXP pathway; isopentenyl diphosphate from 1-deoxy-D-xylulose 5-phosphate: step 3/6. Catalyzes the phosphorylation of the position 2 hydroxy group of 4-diphosphocytidyl-2C-methyl-D-erythritol. The chain is 4-diphosphocytidyl-2-C-methyl-D-erythritol kinase from Bordetella bronchiseptica (strain ATCC BAA-588 / NCTC 13252 / RB50) (Alcaligenes bronchisepticus).